The sequence spans 641 residues: Fibrinogen alpha-2 chain (641 aa).

An N-terminal signal peptide occupies residues Met1 to Gly23. A coiled-coil region spans residues Ser107–Arg226. A disordered region spans residues Asp228–Lys327. A glycan (N-linked (GlcNAc...) asparagine) is linked at Asn271. Basic and acidic residues predominate over residues Val279–Val289. The span at Ser293–Thr317 shows a compositional bias: low complexity. The region spanning Arg395 to Gln636 is the Fibrinogen C-terminal domain. N-linked (GlcNAc...) asparagine glycosylation occurs at Asn397. A disulfide bridge links Cys404 with Cys435. Asn458 carries N-linked (GlcNAc...) asparagine glycosylation. A disulfide bridge connects residues Cys571 and Cys584.

Heterohexamer; disulfide linked. Contains 2 sets of 3 non-identical chains (alpha, beta and gamma). The 2 heterotrimers are in head to head conformation with the N-termini in a small central domain. Conversion of fibrinogen to fibrin is triggered by thrombin, which cleaves fibrinopeptides A and B from alpha and beta chains, and thus exposes the N-terminal polymerization sites responsible for the formation of the soft clot. The soft clot is converted into the hard clot by factor XIIIA which catalyzes the epsilon-(gamma-glutamyl)lysine cross-linking between gamma chains (stronger) and between alpha chains (weaker) of different monomers. Post-translationally, forms F13A-mediated cross-links between a glutamine and the epsilon-amino group of a lysine residue, forming fibronectin-fibrinogen heteropolymers.

It is found in the secreted. In terms of biological role, fibrinogen has a double function: yielding monomers that polymerize into fibrin and acting as a cofactor in platelet aggregation. The protein is Fibrinogen alpha-2 chain of Petromyzon marinus (Sea lamprey).